We begin with the raw amino-acid sequence, 493 residues long: Ribose import ATP-binding protein RbsA (493 aa).

ABC transporter domains follow at residues 5–241 (LKIS…VGRR) and 252–491 (EKGE…AAAI). 37 to 44 (GENGAGKS) provides a ligand contact to ATP.

The protein belongs to the ABC transporter superfamily. Ribose importer (TC 3.A.1.2.1) family. As to quaternary structure, the complex is composed of an ATP-binding protein (RbsA), two transmembrane proteins (RbsC) and a solute-binding protein (RbsB).

It is found in the cell inner membrane. It carries out the reaction D-ribose(out) + ATP + H2O = D-ribose(in) + ADP + phosphate + H(+). Its function is as follows. Part of the ABC transporter complex RbsABC involved in ribose import. Responsible for energy coupling to the transport system. The chain is Ribose import ATP-binding protein RbsA from Haemophilus influenzae (strain 86-028NP).